A 417-amino-acid chain; its full sequence is Serine/threonine-protein phosphatase 4 regulatory subunit 2 (417 aa).

Composition is skewed to polar residues over residues 140 to 149, 158 to 170, and 186 to 196; these read EKNNSNSLNR, NSPS…NING, and APMTTNGLPES. The disordered stretch occupies residues 140–417; sequence EKNNSNSLNR…EVTDEPMEQD (278 aa). The residue at position 159 (Ser-159) is a Phosphoserine. Over residues 197–213 the composition is skewed to basic and acidic residues; sequence TDSKEANLQQNEEKNHS. The span at 214-226 shows a compositional bias: low complexity; the sequence is DSSTSESEVSSVS. The residue at position 226 (Ser-226) is a Phosphoserine. Basic and acidic residues predominate over residues 231-258; the sequence is KHPDEDAVEAEGHEVKRLRFDKEGEVRE. Residues 259 to 269 show a composition bias toward polar residues; the sequence is TASQTTSSEIS. Positions 283 to 297 are enriched in basic and acidic residues; it reads QDKDKDSRCTRQHCT. A compositionally biased stretch (acidic residues) spans 298 to 311; sequence EEDEEEDEEEEEES. Residues 318 to 327 are compositionally biased toward basic and acidic residues; sequence MIPERKNQEK. Residues 338 to 350 are compositionally biased toward acidic residues; sequence ETSEENNQMEESD. Positions 353–363 are enriched in basic and acidic residues; that stretch reads QAEKDLLHSEG. Residues 366–375 are compositionally biased toward low complexity; sequence NEGPVSSSSS. Residues 385-399 show a composition bias toward polar residues; the sequence is GSNSSKTGEILSESS. Residues 400–417 are compositionally biased toward acidic residues; sequence MENDDEATEVTDEPMEQD.

Belongs to the PPP4R2 family. As to quaternary structure, serine/threonine-protein phosphatase 4 (PP4) occurs in different assemblies of the catalytic and one or more regulatory subunits. Component of the PP4 complexes PPP4C-PPP4R2, PPP4C-PPP4R2-PPP4R3A and PPP4C-PPP4R2-PPP4R3B. The PPP4C-PPP4R2 complex appears to be a tetramer composed of 2 molecules of PPP4C and 2 molecules of PPP4R2. Interacts with DDX20/GEMIN3 and GEMIN4. Interacts with RPA2; this DNA damage-dependent interaction recruits PPP4C leading to RPA2 dephosphorylation. Widely expressed.

The protein localises to the cytoplasm. The protein resides in the cytoskeleton. It localises to the microtubule organizing center. It is found in the centrosome. Its subcellular location is the nucleus. Regulatory subunit of serine/threonine-protein phosphatase 4 (PP4). May regulate the activity of PPP4C at centrosomal microtubule organizing centers. Its interaction with the SMN complex leads to enhance the temporal localization of snRNPs, suggesting a role of PPP4C in maturation of spliceosomal snRNPs. The PPP4C-PPP4R2-PPP4R3A PP4 complex specifically dephosphorylates H2AX phosphorylated on 'Ser-140' (gamma-H2AX) generated during DNA replication and required for DNA double strand break repair. Mediates RPA2 dephosphorylation by recruiting PPP4C to RPA2 in a DNA damage-dependent manner. RPA2 dephosphorylation is required for the efficient RPA2-mediated recruitment of RAD51 to chromatin following double strand breaks, an essential step for DNA repair. The polypeptide is Serine/threonine-protein phosphatase 4 regulatory subunit 2 (PPP4R2) (Homo sapiens (Human)).